The chain runs to 944 residues: Protein unc-45 homolog A (944 aa).

The disordered stretch occupies residues 1–25; it reads MTVSGPGTPEPRPSDPGASSAEELR. TPR repeat units lie at residues 21–54, 58–91, and 92–125; these read AEEL…GATP, AILH…DGGD, and VKAL…EPKN. Position 70 is an N6-acetyllysine (Lys-70). Lys-483 is subject to N6-acetyllysine.

In terms of assembly, interacts with PGR isoforms A and B as well as with NR3C1 in the absence of ligand, and with HSP90AB1. Binding to HSP90AB1 involves 2 UNC45A monomers per HSP90AB1 dimer.

Its subcellular location is the cytoplasm. It localises to the perinuclear region. It is found in the nucleus. Functionally, may act as co-chaperone for HSP90 (Potential). Prevents the stimulation of HSP90AB1 ATPase activity by AHSA1. Positive factor in promoting PGR function in the cell. May be necessary for proper folding of myosin (Potential). Necessary for normal cell proliferation. Necessary for normal myotube formation and myosin accumulation during muscle cell development. May play a role in erythropoiesis in stroma cells in the spleen. This Rattus norvegicus (Rat) protein is Protein unc-45 homolog A (Unc45a).